The sequence spans 78 residues: Major outer membrane lipoprotein Lpp (78 aa).

Positions 1-20 are cleaved as a signal peptide; the sequence is MNRTKIVLGAVVLASTLLAG. A lipid anchor (N-palmitoyl cysteine) is attached at Cys21. Cys21 carries S-diacylglycerol cysteine lipidation. 2 consecutive repeats follow at residues 24-34 and 38-48; these read TAKVDQLTSDI and NAKVDQLSNDV. Residues 27-75 adopt a coiled-coil conformation; the sequence is VDQLTSDIQTLNAKVDQLSNDVNAVHTDVQAAKDDAARANQRLDNQVRS. Lys78 is modified (N6-murein peptidoglycan lysine).

Belongs to the Lpp family. In terms of assembly, homotrimer.

Its subcellular location is the cell outer membrane. The protein resides in the secreted. It is found in the cell wall. Its function is as follows. A highly abundant outer membrane lipoprotein that controls the distance between the inner and outer membranes. The only protein known to be covalently linked to the peptidoglycan network (PGN). Also non-covalently binds the PGN. The link between the cell outer membrane and PGN contributes to maintenance of the structural and functional integrity of the cell envelope, and maintains the correct distance between the PGN and the outer membrane. The chain is Major outer membrane lipoprotein Lpp from Photorhabdus laumondii subsp. laumondii (strain DSM 15139 / CIP 105565 / TT01) (Photorhabdus luminescens subsp. laumondii).